Here is a 373-residue protein sequence, read N- to C-terminus: MIVLLILSLACTAFTYRLQGFTNAGIVAYKNIQDGNEDDNIVFSPFGYSFSMFMSLLPASGNTKVELLKTMDLRKIDLGPAFTELISGLAKPKTSKYTYTDLTYQSFVDNTVCIKPSYYQQYHRFGLYRLNFRRDAVNKINSIVERRSGMSNVVDSTMLDNNTLWAIINTIYFKGTWQYPFDITKTHNTSFTNKYGTKTVPMMSVVTKLQGNTITIDDEEYDMVRLQYKDANISMYLAIGDNMTHFTDSIMAAKLDYWSSQLGNKVYNLKLPRFSIENKRDIKSIAEMMAPSMFNPDNASFKHMTRDPLYIYKMFQNAKIDVNEQGTVAEASTIMVATVRSSPEELEFNTPFVFIIRHDITGFILFMGKVESP.

The signal sequence occupies residues Met-1–Thr-15.

Belongs to the serpin family. Orthopoxvirus OPG040 subfamily. As to quaternary structure, interacts with A56 protein.

It is found in the virion membrane. Its subcellular location is the host cell membrane. Prevents cell to cell fusion via its interaction with A56 protein. The A56-K2 complex associates with components of the entry fusion complex (EFC) presumably to avoid superinfection and syncytium formation. In Homo sapiens (Human), this protein is Superinfection exclusion protein (OPG040).